Consider the following 355-residue polypeptide: Uroporphyrinogen decarboxylase (355 aa).

Substrate-binding positions include 27–31, D77, Y154, T209, and H328; that span reads RQAGR.

Belongs to the uroporphyrinogen decarboxylase family. As to quaternary structure, homodimer.

The protein localises to the cytoplasm. The enzyme catalyses uroporphyrinogen III + 4 H(+) = coproporphyrinogen III + 4 CO2. It participates in porphyrin-containing compound metabolism; protoporphyrin-IX biosynthesis; coproporphyrinogen-III from 5-aminolevulinate: step 4/4. Functionally, catalyzes the decarboxylation of four acetate groups of uroporphyrinogen-III to yield coproporphyrinogen-III. The sequence is that of Uroporphyrinogen decarboxylase from Photobacterium profundum (strain SS9).